Consider the following 445-residue polypeptide: N-succinylarginine dihydrolase (445 aa).

Substrate-binding positions include 19 to 28 (AGLSFGNVAS), Asn110, and 137 to 138 (HR). Glu174 is an active-site residue. Position 214 (Arg214) interacts with substrate. His250 is a catalytic residue. Substrate-binding residues include Asp252 and Asn363. The Nucleophile role is filled by Cys369.

This sequence belongs to the succinylarginine dihydrolase family. Homodimer.

It catalyses the reaction N(2)-succinyl-L-arginine + 2 H2O + 2 H(+) = N(2)-succinyl-L-ornithine + 2 NH4(+) + CO2. It functions in the pathway amino-acid degradation; L-arginine degradation via AST pathway; L-glutamate and succinate from L-arginine: step 2/5. Its function is as follows. Catalyzes the hydrolysis of N(2)-succinylarginine into N(2)-succinylornithine, ammonia and CO(2). The polypeptide is N-succinylarginine dihydrolase (Shewanella woodyi (strain ATCC 51908 / MS32)).